The sequence spans 418 residues: 4-hydroxy-3-methylbut-2-en-1-yl diphosphate synthase (flavodoxin) (418 aa).

[4Fe-4S] cluster is bound by residues cysteine 305, cysteine 308, cysteine 351, and glutamate 358.

The protein belongs to the IspG family. Requires [4Fe-4S] cluster as cofactor.

It carries out the reaction (2E)-4-hydroxy-3-methylbut-2-enyl diphosphate + oxidized [flavodoxin] + H2O + 2 H(+) = 2-C-methyl-D-erythritol 2,4-cyclic diphosphate + reduced [flavodoxin]. It participates in isoprenoid biosynthesis; isopentenyl diphosphate biosynthesis via DXP pathway; isopentenyl diphosphate from 1-deoxy-D-xylulose 5-phosphate: step 5/6. Converts 2C-methyl-D-erythritol 2,4-cyclodiphosphate (ME-2,4cPP) into 1-hydroxy-2-methyl-2-(E)-butenyl 4-diphosphate. The sequence is that of 4-hydroxy-3-methylbut-2-en-1-yl diphosphate synthase (flavodoxin) from Bartonella bacilliformis (strain ATCC 35685 / KC583 / Herrer 020/F12,63).